A 282-amino-acid polypeptide reads, in one-letter code: MPAQIISGTELSKNIKFNVAEKIQHYLQQGKRAPGLAVILVGADPASQVYVGSKRRSCEELGIYSKSYDLPAETTEQELLTLIEQLNQDPQIDGILVQLPLPKKINSTKVIEHISPTKDIDGFHPYNVGRLCQRIPTLRACTPLGIMKLLETTGVDLYGQHAVIVGASNIVGRPMALELLLAGCTVTVTHRFTKDLKSHVHQADILVVAVGKPHIIPGEWIKEGAIVIDVGINRVDGKLVGDVQYDEASKKASFITPVPGGVGPMTVAMLMFNTLLAYESHS.

NADP(+) contacts are provided by residues 166-168 and I232; that span reads GAS.

Belongs to the tetrahydrofolate dehydrogenase/cyclohydrolase family. In terms of assembly, homodimer.

It carries out the reaction (6R)-5,10-methylene-5,6,7,8-tetrahydrofolate + NADP(+) = (6R)-5,10-methenyltetrahydrofolate + NADPH. It catalyses the reaction (6R)-5,10-methenyltetrahydrofolate + H2O = (6R)-10-formyltetrahydrofolate + H(+). The protein operates within one-carbon metabolism; tetrahydrofolate interconversion. Catalyzes the oxidation of 5,10-methylenetetrahydrofolate to 5,10-methenyltetrahydrofolate and then the hydrolysis of 5,10-methenyltetrahydrofolate to 10-formyltetrahydrofolate. This Histophilus somni (strain 129Pt) (Haemophilus somnus) protein is Bifunctional protein FolD.